The chain runs to 141 residues: Hemoglobin subunit alpha (141 aa).

The Globin domain maps to 1-141 (VLSAADKSNV…VSTVLTSKYR (141 aa)). The residue at position 3 (Ser3) is a Phosphoserine. An N6-succinyllysine mark is found at Lys7 and Lys11. Residue Lys16 is modified to N6-acetyllysine; alternate. Lys16 carries the N6-succinyllysine; alternate modification. The residue at position 24 (Tyr24) is a Phosphotyrosine. Position 35 is a phosphoserine (Ser35). Lys40 carries the N6-succinyllysine modification. Phosphoserine is present on Ser49. His58 contributes to the O2 binding site. His87 is a binding site for heme b. Residue Ser102 is modified to Phosphoserine. The residue at position 108 (Thr108) is a Phosphothreonine. Ser124 is modified (phosphoserine). Phosphothreonine occurs at positions 134 and 137. Ser138 is subject to Phosphoserine.

This sequence belongs to the globin family. As to quaternary structure, heterotetramer of two alpha chains and two beta chains. Red blood cells.

Functionally, involved in oxygen transport from the lung to the various peripheral tissues. In terms of biological role, hemopressin acts as an antagonist peptide of the cannabinoid receptor CNR1. Hemopressin-binding efficiently blocks cannabinoid receptor CNR1 and subsequent signaling. In Rangifer tarandus (Reindeer), this protein is Hemoglobin subunit alpha (HBA).